We begin with the raw amino-acid sequence, 320 residues long: Aspartate carbamoyltransferase catalytic subunit (320 aa).

Carbamoyl phosphate contacts are provided by R70 and T71. Position 98 (K98) interacts with L-aspartate. R120, H149, and Q152 together coordinate carbamoyl phosphate. The L-aspartate site is built by R182 and R237. Carbamoyl phosphate contacts are provided by G278 and P279.

This sequence belongs to the aspartate/ornithine carbamoyltransferase superfamily. ATCase family. As to quaternary structure, heterododecamer (2C3:3R2) of six catalytic PyrB chains organized as two trimers (C3), and six regulatory PyrI chains organized as three dimers (R2).

It catalyses the reaction carbamoyl phosphate + L-aspartate = N-carbamoyl-L-aspartate + phosphate + H(+). It participates in pyrimidine metabolism; UMP biosynthesis via de novo pathway; (S)-dihydroorotate from bicarbonate: step 2/3. Functionally, catalyzes the condensation of carbamoyl phosphate and aspartate to form carbamoyl aspartate and inorganic phosphate, the committed step in the de novo pyrimidine nucleotide biosynthesis pathway. The protein is Aspartate carbamoyltransferase catalytic subunit of Ruthia magnifica subsp. Calyptogena magnifica.